The chain runs to 282 residues: Insulin-like growth factor-binding protein 7 (282 aa).

A signal peptide spans 1-26 (MERPSLRALLLGAAGLLLLLLPLSSS). The region spanning 28–114 (SSDTCGPCEP…PGVSGVCVCK (87 aa)) is the IGFBP N-terminal domain. Intrachain disulfides connect Cys-32–Cys-57, Cys-35–Cys-59, Cys-40–Cys-60, Cys-48–Cys-63, Cys-71–Cys-87, Cys-81–Cys-111, and Cys-120–Cys-156. The 54-residue stretch at 105–158 (PGVSGVCVCKSRYPVCGSDGTTYPSGCQLRAASQRAESRGEKAITQVSKGTCEQ) folds into the Kazal-like domain. In terms of domain architecture, Ig-like C2-type spans 160 to 264 (PSIVTPPKDI…GQASASAKIT (105 aa)). Asn-171 carries N-linked (GlcNAc...) asparagine glycosylation. Cys-181 and Cys-248 are disulfide-bonded. The residue at position 239 (Ser-239) is a Phosphoserine; by FAM20C.

As to quaternary structure, may interact with VPS24/CHMP3; the relevance of such interaction however remains unclear. Interacts with CD93; this interaction plays a role in endothelial cells angiogenesis. In terms of processing, N-glycosylated.

Its subcellular location is the secreted. Its function is as follows. Binds IGF1 and IGF2 with a relatively low affinity. Stimulates prostacyclin (PGI2) production. Stimulates cell adhesion. Acts as a ligand for CD93 to play a role in angiogenesis. This is Insulin-like growth factor-binding protein 7 (IGFBP7) from Homo sapiens (Human).